Reading from the N-terminus, the 207-residue chain is Large ribosomal subunit protein uL4 (207 aa).

This sequence belongs to the universal ribosomal protein uL4 family. As to quaternary structure, part of the 50S ribosomal subunit.

In terms of biological role, one of the primary rRNA binding proteins, this protein initially binds near the 5'-end of the 23S rRNA. It is important during the early stages of 50S assembly. It makes multiple contacts with different domains of the 23S rRNA in the assembled 50S subunit and ribosome. Forms part of the polypeptide exit tunnel. The polypeptide is Large ribosomal subunit protein uL4 (Rickettsia conorii (strain ATCC VR-613 / Malish 7)).